The chain runs to 196 residues: Protein GrpE (196 aa).

The interval 1 to 40 (MSSKEQKTPEGQAPEEIIMDQHEEVEAVEPNDSAEQVDPR) is disordered.

Belongs to the GrpE family. In terms of assembly, homodimer.

It is found in the cytoplasm. In terms of biological role, participates actively in the response to hyperosmotic and heat shock by preventing the aggregation of stress-denatured proteins, in association with DnaK and GrpE. It is the nucleotide exchange factor for DnaK and may function as a thermosensor. Unfolded proteins bind initially to DnaJ; upon interaction with the DnaJ-bound protein, DnaK hydrolyzes its bound ATP, resulting in the formation of a stable complex. GrpE releases ADP from DnaK; ATP binding to DnaK triggers the release of the substrate protein, thus completing the reaction cycle. Several rounds of ATP-dependent interactions between DnaJ, DnaK and GrpE are required for fully efficient folding. This chain is Protein GrpE, found in Salmonella enteritidis PT4 (strain P125109).